The sequence spans 226 residues: MTTTELVALLHLASPALPIGAYSYSQGLEAALDANLIRDADSARDWIASGLTDVLAHGELPFLAHQLARWQTDDTHALAAENAWFVASRESAELRRETEQMGWSLAQLCASLEWGDAARRATLASLSPIALPTAFAYAAAAHDASADATLAAYAFGWVENQTSAALKAVPLGQLAGQRIIVALRGAIDAAVRRALATPPDAVNTFAPQLGILSARHETQYSRLFRS.

Belongs to the UreF family. As to quaternary structure, ureD, UreF and UreG form a complex that acts as a GTP-hydrolysis-dependent molecular chaperone, activating the urease apoprotein by helping to assemble the nickel containing metallocenter of UreC. The UreE protein probably delivers the nickel.

It localises to the cytoplasm. Required for maturation of urease via the functional incorporation of the urease nickel metallocenter. The protein is Urease accessory protein UreF of Burkholderia cenocepacia (strain ATCC BAA-245 / DSM 16553 / LMG 16656 / NCTC 13227 / J2315 / CF5610) (Burkholderia cepacia (strain J2315)).